The primary structure comprises 86 residues: Kappa-theraphotoxin-Cg1a 1 (86 aa).

The signal sequence occupies residues 1–21 (MKVSVLITLAVLGVMFVWASA). Residues 22-50 (AELEERGSDQRDSPAWLKSMERIFQSGER) constitute a propeptide that is removed on maturation. 3 cysteine pairs are disulfide-bonded: C52/C66, C59/C71, and C65/C78. An involved in active face region spans residues 55–56 (MF). At F84 the chain carries Phenylalanine amide.

It belongs to the neurotoxin 10 (Hwtx-1) family. 28 (Jztx-11) subfamily. Expressed by the venom gland.

The protein resides in the secreted. This toxin acts as a voltage-dependent gating-modifier. It inhibits the sodium conductance (IC(50)=124 nM) and slows the fast inactivation (EC(50)=1180 nM) of Nav1.5/SCN5A. It significantly shifts the activation to more depolarized voltages and decreases the deactivation of Nav1.5 currents upon extreme depolarization, but only slightly affects voltage-dependence of steady-state inactivation. In addition, this toxin causes an approximately five-fold decrease in the rate of recovery from inactivation and an approximately 1.9-fold reduction in the closed-state inactivation rate. This toxin integrates the functions of site 3 toxins (alpha-scorpion toxins) with site 4 toxins (beta-scorpion and spider toxins) by targeting multiple sites on Nav1.5. Also shows inhibition of voltage-gated potassium channels (5 uM completely inhibits Kv2.1/KCNB1, whereas 5 uM moderately inhibits Kv4.2/KCND2 Kv4.1/KCND1 channels). The polypeptide is Kappa-theraphotoxin-Cg1a 1 (Chilobrachys guangxiensis (Chinese earth tiger tarantula)).